A 347-amino-acid polypeptide reads, in one-letter code: Protein-glutamate methylesterase/protein-glutamine glutaminase 2 (347 aa).

In terms of domain architecture, Response regulatory spans 2-119 (RVMIVDDSAV…LGGADLYRKD (118 aa)). The residue at position 52 (D52) is a 4-aspartylphosphate. The interval 131–153 (AARPAPPQAAPRPTLAPPSSDPA) is disordered. Pro residues predominate over residues 134–150 (PAPPQAAPRPTLAPPSS). The CheB-type methylesterase domain occupies 152–346 (PAGPIEAVVV…PYIASRARSV (195 aa)). Catalysis depends on residues S164, H191, and D288.

The protein belongs to the CheB family. Phosphorylated by CheA. Phosphorylation of the N-terminal regulatory domain activates the methylesterase activity.

Its subcellular location is the cytoplasm. The enzyme catalyses [protein]-L-glutamate 5-O-methyl ester + H2O = L-glutamyl-[protein] + methanol + H(+). It catalyses the reaction L-glutaminyl-[protein] + H2O = L-glutamyl-[protein] + NH4(+). Functionally, involved in chemotaxis. Part of a chemotaxis signal transduction system that modulates chemotaxis in response to various stimuli. Catalyzes the demethylation of specific methylglutamate residues introduced into the chemoreceptors (methyl-accepting chemotaxis proteins or MCP) by CheR. Also mediates the irreversible deamidation of specific glutamine residues to glutamic acid. This chain is Protein-glutamate methylesterase/protein-glutamine glutaminase 2, found in Caulobacter vibrioides (strain ATCC 19089 / CIP 103742 / CB 15) (Caulobacter crescentus).